A 98-amino-acid chain; its full sequence is Large ribosomal subunit protein uL23 (98 aa).

The protein belongs to the universal ribosomal protein uL23 family. As to quaternary structure, part of the 50S ribosomal subunit. Contacts protein L29, and trigger factor when it is bound to the ribosome.

One of the early assembly proteins it binds 23S rRNA. One of the proteins that surrounds the polypeptide exit tunnel on the outside of the ribosome. Forms the main docking site for trigger factor binding to the ribosome. This Nitrobacter winogradskyi (strain ATCC 25391 / DSM 10237 / CIP 104748 / NCIMB 11846 / Nb-255) protein is Large ribosomal subunit protein uL23.